A 66-amino-acid polypeptide reads, in one-letter code: DNA-directed RNA polymerase subunit Rpo10 (66 aa).

Zn(2+)-binding residues include Cys-7, Cys-10, Cys-44, and Cys-45.

This sequence belongs to the archaeal Rpo10/eukaryotic RPB10 RNA polymerase subunit family. Part of the RNA polymerase complex. The cofactor is Zn(2+).

It is found in the cytoplasm. The enzyme catalyses RNA(n) + a ribonucleoside 5'-triphosphate = RNA(n+1) + diphosphate. Functionally, DNA-dependent RNA polymerase (RNAP) catalyzes the transcription of DNA into RNA using the four ribonucleoside triphosphates as substrates. This is DNA-directed RNA polymerase subunit Rpo10 from Sulfurisphaera tokodaii (strain DSM 16993 / JCM 10545 / NBRC 100140 / 7) (Sulfolobus tokodaii).